Reading from the N-terminus, the 435-residue chain is MSSDPPAKTQHCSFCGIEQGRDTPLIAGIEGQICEACVRLAEQVVANWGRKRSMAELHGNVPKPEDIKRHLDQYVIGQELAKEILSVAVYNHYKRLRHESREILGLAGSDTEVQVGKSNILMIGPTGTGKTLLASTLARIVGVPFVVADATTLTQAGYVGDDVENILVRLLEAADGSVERAEWGIVYIDEVDKLAKSPEMAINTRDISGEGVQQALLRFVEGSQVKVAARGRRREGSGGGEEVTIDTRNILFIAGGAFPGLERHVEKRIGPPRGEIGFHAPVQDAKRPLLEELLAEIQPEDLRRFGLIPEFIGRFPVIAPLEPLDEAAFVRILTEPRDALVRQYQKLFAYEGVELVFTEPAIRRIAARTIERDTGARGLRSIIEHILRRPMFEIPSQSDVRQCVVDADTVDGKAPVTLVRAEEEAGGARLAAGEV.

Positions 1 to 53 constitute a ClpX-type ZB domain; the sequence is MSSDPPAKTQHCSFCGIEQGRDTPLIAGIEGQICEACVRLAEQVVANWGRKRS. 4 residues coordinate Zn(2+): Cys12, Cys15, Cys34, and Cys37. 125–132 serves as a coordination point for ATP; sequence PTGTGKTL.

This sequence belongs to the ClpX chaperone family. In terms of assembly, component of the ClpX-ClpP complex. Forms a hexameric ring that, in the presence of ATP, binds to fourteen ClpP subunits assembled into a disk-like structure with a central cavity, resembling the structure of eukaryotic proteasomes.

ATP-dependent specificity component of the Clp protease. It directs the protease to specific substrates. Can perform chaperone functions in the absence of ClpP. The sequence is that of ATP-dependent Clp protease ATP-binding subunit ClpX 3 from Methylococcus capsulatus (strain ATCC 33009 / NCIMB 11132 / Bath).